The following is a 224-amino-acid chain: ATP synthase subunit a (224 aa).

6 helical membrane passes run 17–37 (LSLN…IYWL), 72–92 (IFIS…FPYI), 99–119 (LTLT…YGWI), 125–145 (MFAH…MVCI), 170–190 (LLLT…VTFL), and 195–215 (IALL…FAVL).

Belongs to the ATPase A chain family. In terms of assembly, F-type ATPases have 2 components, CF(1) - the catalytic core - and CF(0) - the membrane proton channel. CF(1) has five subunits: alpha(3), beta(3), gamma(1), delta(1), epsilon(1). CF(0) has three main subunits: a, b and c.

Its subcellular location is the mitochondrion inner membrane. Its function is as follows. Mitochondrial membrane ATP synthase (F(1)F(0) ATP synthase or Complex V) produces ATP from ADP in the presence of a proton gradient across the membrane which is generated by electron transport complexes of the respiratory chain. F-type ATPases consist of two structural domains, F(1) - containing the extramembraneous catalytic core and F(0) - containing the membrane proton channel, linked together by a central stalk and a peripheral stalk. During catalysis, ATP synthesis in the catalytic domain of F(1) is coupled via a rotary mechanism of the central stalk subunits to proton translocation. Key component of the proton channel; it may play a direct role in the translocation of protons across the membrane. This is ATP synthase subunit a (mt:ATPase6) from Drosophila mauritiana (Fruit fly).